The sequence spans 194 residues: Large ribosomal subunit protein bL9c (194 aa).

Residues 1-39 (MASSTLSSLSSTPLQHSFAANLKTCSQFPNKSSGFMVFA) constitute a chloroplast transit peptide.

This sequence belongs to the bacterial ribosomal protein bL9 family. Part of the 50S ribosomal subunit.

It localises to the plastid. The protein resides in the chloroplast. Binds to the 23S rRNA. The protein is Large ribosomal subunit protein bL9c (RPL9) of Pisum sativum (Garden pea).